Reading from the N-terminus, the 47-residue chain is Snake venom metalloproteinase jararafibrase-4 (47 aa).

A Peptidase M12B domain is found at 6-47 (RYIELFLVVDHGMFMKYNGNSDKIYYYIHQMVNIMKXAYXYL). A Ca(2+)-binding site is contributed by Glu-9.

It belongs to the venom metalloproteinase (M12B) family. As to quaternary structure, monomer. It depends on Zn(2+) as a cofactor. In terms of tissue distribution, expressed by the venom gland.

Its subcellular location is the secreted. Its activity is regulated as follows. Inhibited by 1,10-phenanthroline and EDTA. Functionally, the metalloproteinase is a probable venom zinc protease that induces local hemorrhage in the skin of rats. Degrades type-IV collagen, gelatin, laminin and fibronectin. Has fibrinolytic activities. Has high hemagglutinating activity on red blood cells. Cleaves insulin B chain at 29-His-|-Leu-30, and 38-Ala-|-Leu-39 bonds. The chain is Snake venom metalloproteinase jararafibrase-4 from Bothrops jararaca (Jararaca).